The sequence spans 539 residues: Histone-arginine methyltransferase CARMER (539 aa).

In terms of domain architecture, SAM-dependent MTase PRMT-type spans 149 to 458; it reads ASQYFQFYGY…QSYDVTIDLH (310 aa). S-adenosyl-L-methionine contacts are provided by glutamine 162, arginine 171, glycine 195, glutamate 217, glutamate 246, and threonine 274. Residue arginine 509 is modified to Asymmetric dimethylarginine; by autocatalysis.

It belongs to the class I-like SAM-binding methyltransferase superfamily. Protein arginine N-methyltransferase family. Homodimer. The dimethylated protein is the major form.

It localises to the cytoplasm. Its subcellular location is the nucleus. The catalysed reaction is L-arginyl-[protein] + 2 S-adenosyl-L-methionine = N(omega),N(omega)-dimethyl-L-arginyl-[protein] + 2 S-adenosyl-L-homocysteine + 2 H(+). In terms of biological role, methylates (mono- and asymmetric dimethylation) the guanidino nitrogens of arginyl residues in proteins. May methylate histone H3 at 'Arg-17' and activate transcription via chromatin remodeling. In Drosophila mojavensis (Fruit fly), this protein is Histone-arginine methyltransferase CARMER (Art4).